The chain runs to 161 residues: Urease accessory protein UreE (161 aa).

Belongs to the UreE family.

It localises to the cytoplasm. Its function is as follows. Involved in urease metallocenter assembly. Binds nickel. Probably functions as a nickel donor during metallocenter assembly. The polypeptide is Urease accessory protein UreE (Arthrobacter sp. (strain FB24)).